A 314-amino-acid chain; its full sequence is Olfactory receptor 8D4 (314 aa).

The Extracellular portion of the chain corresponds to 1–25 (MGVKNHSTVTEFLLSGLTEQAELQL). A glycan (N-linked (GlcNAc...) asparagine) is linked at N5. A helical membrane pass occupies residues 26-46 (PLFCLFLGIYTVTVVGNLSMI). Over 47 to 54 (SIIRLNRQ) the chain is Cytoplasmic. Residues 55 to 75 (LHTPMYYFLSSLSFLDFCYSS) form a helical membrane-spanning segment. Topologically, residues 76-99 (VITPKMLSGFLCRDRSISYSGCMI) are extracellular. An intrachain disulfide couples C97 to C189. Residues 100–120 (QLFFFCVCVISECYMLAAMAC) traverse the membrane as a helical segment. The Cytoplasmic segment spans residues 121–139 (DRYVAICSPLLYRVIMSPR). A helical transmembrane segment spans residues 140 to 160 (VCSLLVAAVFSVGFTDAVIHG). The Extracellular segment spans residues 161-197 (GCILRLSFCGSNIIKHYFCDIVPLIKLSCSSTYIDEL). A helical transmembrane segment spans residues 198–217 (LIFVIGGFNMVATSLTIIIS). Over 218–237 (YAFILTSILRIHSKKGRCKA) the chain is Cytoplasmic. Residues 238 to 258 (FSTCSSHLTAVLMFYGSLMSM) traverse the membrane as a helical segment. The Extracellular portion of the chain corresponds to 259 to 271 (YLKPASSSSLTQE). The chain crosses the membrane as a helical span at residues 272-292 (KVSSVFYTTVILMLNPLIYSL). Residues 293-314 (RNNEVRNALMKLLRRKISLSPG) lie on the Cytoplasmic side of the membrane.

The protein belongs to the G-protein coupled receptor 1 family.

The protein resides in the cell membrane. Its function is as follows. Odorant receptor. In Homo sapiens (Human), this protein is Olfactory receptor 8D4 (OR8D4).